Consider the following 305-residue polypeptide: Putative S-adenosyl-L-methionine-dependent methyltransferase MAB_4607c (305 aa).

S-adenosyl-L-methionine-binding positions include Asp128 and 155–156; that span reads DL.

The protein belongs to the UPF0677 family.

Functionally, exhibits S-adenosyl-L-methionine-dependent methyltransferase activity. The polypeptide is Putative S-adenosyl-L-methionine-dependent methyltransferase MAB_4607c (Mycobacteroides abscessus (strain ATCC 19977 / DSM 44196 / CCUG 20993 / CIP 104536 / JCM 13569 / NCTC 13031 / TMC 1543 / L948) (Mycobacterium abscessus)).